Here is a 46-residue protein sequence, read N- to C-terminus: Acetylajmalan esterase (46 aa).

Asparagine 39 is a glycosylation site (N-linked (GlcNAc...) asparagine).

The protein belongs to the 'GDSL' lipolytic enzyme family.

It catalyses the reaction 17-O-acetylajmaline + H2O = ajmaline + acetate + H(+). It carries out the reaction 17-O-acetylnorajmaline + H2O = norajmaline + acetate + H(+). Its function is as follows. Deacetylates 17-O-acetylajmaline and 17-O-acetylnorajmaline, but is inactive toward other acetylated alkaloids. This is Acetylajmalan esterase from Rauvolfia verticillata (Common devil-pepper).